A 285-amino-acid chain; its full sequence is ATP phosphoribosyltransferase (285 aa).

It belongs to the ATP phosphoribosyltransferase family. Long subfamily. Requires Mg(2+) as cofactor.

It localises to the cytoplasm. It catalyses the reaction 1-(5-phospho-beta-D-ribosyl)-ATP + diphosphate = 5-phospho-alpha-D-ribose 1-diphosphate + ATP. The protein operates within amino-acid biosynthesis; L-histidine biosynthesis; L-histidine from 5-phospho-alpha-D-ribose 1-diphosphate: step 1/9. Its activity is regulated as follows. Feedback inhibited by histidine. Catalyzes the condensation of ATP and 5-phosphoribose 1-diphosphate to form N'-(5'-phosphoribosyl)-ATP (PR-ATP). Has a crucial role in the pathway because the rate of histidine biosynthesis seems to be controlled primarily by regulation of HisG enzymatic activity. In Sulfolobus acidocaldarius (strain ATCC 33909 / DSM 639 / JCM 8929 / NBRC 15157 / NCIMB 11770), this protein is ATP phosphoribosyltransferase.